A 128-amino-acid chain; its full sequence is Small ribosomal subunit protein eS8 (128 aa).

The protein belongs to the eukaryotic ribosomal protein eS8 family. In terms of assembly, part of the 30S ribosomal subunit.

In Methanococcus maripaludis (strain DSM 14266 / JCM 13030 / NBRC 101832 / S2 / LL), this protein is Small ribosomal subunit protein eS8.